The sequence spans 221 residues: Potassium voltage-gated channel subfamily E member 4 (221 aa).

At 1-86 (MHFLTIYPNC…AGGGSGNGNE (86 aa)) the chain is on the extracellular side. The N-linked (GlcNAc...) asparagine glycan is linked to N9. Residues 58-72 (LNSTHPGTAASSSPL) show a composition bias toward polar residues. Residues 58-77 (LNSTHPGTAASSSPLESRAA) are disordered. A helical membrane pass occupies residues 87-107 (YFYILVVMSFYGIFLIGIMLG). The Cytoplasmic portion of the chain corresponds to 108-221 (YMKSKRREKK…GSSENIHQNS (114 aa)). Positions 175 to 221 (SVSSESSSPDVHLTIQEEGADDELEETSETPLNESSEGSSENIHQNS) are disordered. Over residues 192 to 202 (EGADDELEETS) the composition is skewed to acidic residues. Residues 203-221 (ETPLNESSEGSSENIHQNS) show a composition bias toward polar residues.

Belongs to the potassium channel KCNE family. As to quaternary structure, forms heterooligomers with KCNA3, inhibiting its activity by impairing localization to the cell membrane. The stoichiometry of KCNA3 and KCNE4 in the heterooligomers are 4:1, 4:2, 4:3 or 4:4 respectively. Increasing the number of KCNE4 subunits steadily slows the activation KCNA3 and decreases its abundance at the cell membrane. However, a single subunit of KCNE4 is sufficient for the cooperative enhancement of the inactivating function of the channel. However, a single subunit of KCNE4 is sufficient for the cooperative enhancement of the inactivating function of the channel. Interacts with KCNQ1; impairs KCNQ1 localization in lipid rafts and inhibits voltage-gated potassium channel activity. As to expression, predominantly expressed in embryo and adult uterus. Low expression found in kidney, small intestine, lung and heart. In terms of tissue distribution, detected in kidney, thymus, and uterus (at protein level).

The protein resides in the membrane. Ancillary protein that functions as a regulatory subunit of the voltage-gated potassium (Kv) channel complex composed of pore-forming and potassium-conducting alpha subunits and of regulatory beta subunits. KCNE4 beta subunit modulates the gating kinetics and enhances stability of the channel complex. Associates with KCNQ1/KVLTQ1 alpha subunit to inhibit potassium currents. In terms of biological role, may inhibit KCNQ4-mediated potassium currents. The chain is Potassium voltage-gated channel subfamily E member 4 from Homo sapiens (Human).